The chain runs to 404 residues: NADH-quinone oxidoreductase subunit D (404 aa).

It belongs to the complex I 49 kDa subunit family. In terms of assembly, NDH-1 is composed of 14 different subunits. Subunits NuoB, C, D, E, F, and G constitute the peripheral sector of the complex.

It is found in the cell inner membrane. The catalysed reaction is a quinone + NADH + 5 H(+)(in) = a quinol + NAD(+) + 4 H(+)(out). In terms of biological role, NDH-1 shuttles electrons from NADH, via FMN and iron-sulfur (Fe-S) centers, to quinones in the respiratory chain. The immediate electron acceptor for the enzyme in this species is believed to be ubiquinone. Couples the redox reaction to proton translocation (for every two electrons transferred, four hydrogen ions are translocated across the cytoplasmic membrane), and thus conserves the redox energy in a proton gradient. In Dinoroseobacter shibae (strain DSM 16493 / NCIMB 14021 / DFL 12), this protein is NADH-quinone oxidoreductase subunit D.